The sequence spans 813 residues: Protein SBE22 (813 aa).

Disordered regions lie at residues 1–66 (MIRP…HGHA), 107–240 (EIFS…GEFG), and 331–359 (QKDS…NRES). A compositionally biased stretch (basic and acidic residues) spans 56 to 66 (RPSDNLFHGHA). Low complexity predominate over residues 107 to 121 (EIFSTSSSDTQSNIS). Basic and acidic residues predominate over residues 127–138 (SEDHSFGMDKSV). 3 stretches are compositionally biased toward polar residues: residues 139-160 (DNSS…NGDS), 169-200 (VSVN…NRSM), and 214-234 (KNSS…NRSV).

Belongs to the SBE2 family.

Its subcellular location is the cytoplasm. The protein resides in the golgi apparatus. Functionally, with SBE2, is involved in cell wall integrity and polarity processes like bud growth. The chain is Protein SBE22 (SBE22) from Candida glabrata (strain ATCC 2001 / BCRC 20586 / JCM 3761 / NBRC 0622 / NRRL Y-65 / CBS 138) (Yeast).